A 105-amino-acid polypeptide reads, in one-letter code: Large ribosomal subunit protein uL24 (105 aa).

It belongs to the universal ribosomal protein uL24 family. In terms of assembly, part of the 50S ribosomal subunit.

In terms of biological role, one of two assembly initiator proteins, it binds directly to the 5'-end of the 23S rRNA, where it nucleates assembly of the 50S subunit. Its function is as follows. One of the proteins that surrounds the polypeptide exit tunnel on the outside of the subunit. This is Large ribosomal subunit protein uL24 from Aromatoleum aromaticum (strain DSM 19018 / LMG 30748 / EbN1) (Azoarcus sp. (strain EbN1)).